We begin with the raw amino-acid sequence, 155 residues long: 6,7-dimethyl-8-ribityllumazine synthase (155 aa).

5-amino-6-(D-ribitylamino)uracil contacts are provided by residues phenylalanine 24, 58-60 (AFE), and 82-84 (AII). Position 87–88 (87–88 (ST)) interacts with (2S)-2-hydroxy-3-oxobutyl phosphate. Catalysis depends on histidine 90, which acts as the Proton donor. Phenylalanine 115 lines the 5-amino-6-(D-ribitylamino)uracil pocket. Arginine 129 contributes to the (2S)-2-hydroxy-3-oxobutyl phosphate binding site.

Belongs to the DMRL synthase family.

The enzyme catalyses (2S)-2-hydroxy-3-oxobutyl phosphate + 5-amino-6-(D-ribitylamino)uracil = 6,7-dimethyl-8-(1-D-ribityl)lumazine + phosphate + 2 H2O + H(+). Its pathway is cofactor biosynthesis; riboflavin biosynthesis; riboflavin from 2-hydroxy-3-oxobutyl phosphate and 5-amino-6-(D-ribitylamino)uracil: step 1/2. Its function is as follows. Catalyzes the formation of 6,7-dimethyl-8-ribityllumazine by condensation of 5-amino-6-(D-ribitylamino)uracil with 3,4-dihydroxy-2-butanone 4-phosphate. This is the penultimate step in the biosynthesis of riboflavin. The protein is 6,7-dimethyl-8-ribityllumazine synthase of Chlorobium phaeovibrioides (strain DSM 265 / 1930) (Prosthecochloris vibrioformis (strain DSM 265)).